Reading from the N-terminus, the 221-residue chain is Growth hormone-releasing peptides (221 aa).

An N-terminal signal peptide occupies residues 1–25 (MHLKIGTLTIRTIMLFTLCTFLTLF). Positions 26–95 (AFSTCFDETK…QPENEFLQER (70 aa)) are excised as a propeptide. Residue F107 is modified to Phenylalanine amide. Residues 110-127 (TSDDKIAKSIPSFDKIAK) constitute a propeptide that is removed on maturation. A phenylalanine amide mark is found at F136, F156, and F176. A propeptide spanning residues 179–221 (TPHSDRLQYEMNSHPLELKNPEEDSDRKKRQAMTFRIRTDLQM) is cleaved from the precursor.

This sequence belongs to the FARP (FMRFamide related peptide) family. Observed in the suprachiasmatic nucleus and in several telencephalic and diencephalic regions.

It is found in the secreted. Primary role is to release GH from the pituitary. May act as an endogenous ligand in the bullfrog hypothalamo-hypophysial system. The protein is Growth hormone-releasing peptides of Aquarana catesbeiana (American bullfrog).